Here is a 309-residue protein sequence, read N- to C-terminus: Mannitol-1-phosphatase (309 aa).

His-82 (tele-phosphohistidine intermediate) is an active-site residue. Glu-166 serves as the catalytic Proton donor/acceptor.

This sequence belongs to the phosphoglycerate mutase family.

The catalysed reaction is D-mannitol 1-phosphate + H2O = D-mannitol + phosphate. Its activity is regulated as follows. By diethyl pyrocarbonate (DEPC). Its function is as follows. Key enzyme for mannitol biosynthesis. The protein is Mannitol-1-phosphatase of Eimeria tenella (Coccidian parasite).